We begin with the raw amino-acid sequence, 619 residues long: ATP-dependent zinc metalloprotease FtsH (619 aa).

The Cytoplasmic portion of the chain corresponds to 1-11 (MSNTDPQPPQK). The chain crosses the membrane as a helical span at residues 12–32 (LPLNWVVWTLAVALMLYYLPA). At 33 to 120 (MRDRPEPAIK…EVKEGHDASS (88 aa)) the chain is on the periplasmic side. Residues 121 to 141 (SKVILLSYLPWIMFMIILFWL) form a helical membrane-spanning segment. The Cytoplasmic portion of the chain corresponds to 142–619 (SRRTFRNFSG…IDECLQTGAS (478 aa)). 216–223 (GPPGTGKT) is an ATP binding site. Residue H437 coordinates Zn(2+). E438 is a catalytic residue. Residues H441 and D513 each coordinate Zn(2+).

In the central section; belongs to the AAA ATPase family. This sequence in the C-terminal section; belongs to the peptidase M41 family. Homohexamer. It depends on Zn(2+) as a cofactor.

Its subcellular location is the cell inner membrane. Functionally, acts as a processive, ATP-dependent zinc metallopeptidase for both cytoplasmic and membrane proteins. Plays a role in the quality control of integral membrane proteins. The sequence is that of ATP-dependent zinc metalloprotease FtsH from Hahella chejuensis (strain KCTC 2396).